The following is a 262-amino-acid chain: Hydroxyethylthiazole kinase (262 aa).

Met50 serves as a coordination point for substrate. ATP is bound by residues Arg125 and Thr171. A substrate-binding site is contributed by Gly198.

Belongs to the Thz kinase family. Requires Mg(2+) as cofactor.

It carries out the reaction 5-(2-hydroxyethyl)-4-methylthiazole + ATP = 4-methyl-5-(2-phosphooxyethyl)-thiazole + ADP + H(+). It functions in the pathway cofactor biosynthesis; thiamine diphosphate biosynthesis; 4-methyl-5-(2-phosphoethyl)-thiazole from 5-(2-hydroxyethyl)-4-methylthiazole: step 1/1. Functionally, catalyzes the phosphorylation of the hydroxyl group of 4-methyl-5-beta-hydroxyethylthiazole (THZ). This is Hydroxyethylthiazole kinase from Escherichia coli O6:H1 (strain CFT073 / ATCC 700928 / UPEC).